Reading from the N-terminus, the 126-residue chain is Acidic phospholipase A2 3 (126 aa).

Residues 1–7 constitute a propeptide that is removed on maturation; that stretch reads SNRPMPL. 7 disulfide bridges follow: Cys-18/Cys-78, Cys-33/Cys-125, Cys-35/Cys-51, Cys-50/Cys-106, Cys-57/Cys-99, Cys-67/Cys-92, and Cys-85/Cys-97. Ca(2+) is bound by residues Tyr-34, Gly-36, and Gly-38. His-54 is a catalytic residue. A Ca(2+)-binding site is contributed by Asp-55. Asp-100 is a catalytic residue.

Belongs to the phospholipase A2 family. Group I subfamily. D49 sub-subfamily. Ca(2+) is required as a cofactor. In terms of tissue distribution, expressed by the venom gland.

The protein resides in the secreted. The catalysed reaction is a 1,2-diacyl-sn-glycero-3-phosphocholine + H2O = a 1-acyl-sn-glycero-3-phosphocholine + a fatty acid + H(+). Functionally, PLA2 catalyzes the calcium-dependent hydrolysis of the 2-acyl groups in 3-sn-phosphoglycerides. In Naja sagittifera (Andaman cobra), this protein is Acidic phospholipase A2 3.